A 688-amino-acid chain; its full sequence is Potassium-transporting ATPase ATP-binding subunit (688 aa).

The next 4 helical transmembrane spans lie at 35–55, 62–82, 219–239, and 260–280; these read VMFV…AMLA, ALFT…ANFA, IALT…CVTL, and VLIA…LSAI. Asp313 functions as the 4-aspartylphosphate intermediate in the catalytic mechanism. Residues Asp350, Glu354, 383–390, and Lys401 each bind ATP; that span reads FSAMTRMS. Residues Asp524 and Asp528 each contribute to the Mg(2+) site. A run of 3 helical transmembrane segments spans residues 594-614, 622-642, and 667-687; these read FAII…LNIM, AVLS…PLAL, and GLIA…LLIL.

The protein belongs to the cation transport ATPase (P-type) (TC 3.A.3) family. Type IA subfamily. In terms of assembly, the system is composed of three essential subunits: KdpA, KdpB and KdpC.

Its subcellular location is the cell inner membrane. The enzyme catalyses K(+)(out) + ATP + H2O = K(+)(in) + ADP + phosphate + H(+). Part of the high-affinity ATP-driven potassium transport (or Kdp) system, which catalyzes the hydrolysis of ATP coupled with the electrogenic transport of potassium into the cytoplasm. This subunit is responsible for energy coupling to the transport system and for the release of the potassium ions to the cytoplasm. The polypeptide is Potassium-transporting ATPase ATP-binding subunit (Photorhabdus laumondii subsp. laumondii (strain DSM 15139 / CIP 105565 / TT01) (Photorhabdus luminescens subsp. laumondii)).